The primary structure comprises 1068 residues: Phosphatidylinositol 4,5-bisphosphate 3-kinase catalytic subunit alpha isoform (1068 aa).

The PI3K-ABD domain occupies 16–105 (MPPRILVECL…QPFLKVIEPV (90 aa)). The PI3K-RBD domain occupies 187 to 289 (KGQIIVVIWV…GRMPNLMLMA (103 aa)). Positions 330 to 487 (INSALRIKIL…DWFSSVVKFP (158 aa)) constitute a C2 PI3K-type domain. Residues 517 to 694 (LARDNELREN…GLLLESYCRA (178 aa)) form the PIK helical domain. One can recognise a PI3K/PI4K catalytic domain in the interval 765-1051 (RLEECRIMSS…QMNDAHHGGW (287 aa)). The tract at residues 771–777 (IMSSAKR) is G-loop. Positions 912–920 (GIGDRHNSN) are catalytic loop. The segment at 931–957 (HIDFGHFLDHKKKKFGYKRERVPFVLT) is activation loop.

This sequence belongs to the PI3/PI4-kinase family. As to quaternary structure, heterodimer of a catalytic subunit PIK3CA and a p85 regulatory subunit (PIK3R1, PIK3R2 or PIK3R3). Interacts with IRS1 in nuclear extracts. Interacts with RUFY3. Interacts with RASD2. Interacts with APPL1. Interacts with HRAS and KRAS. Interaction with HRAS/KRAS is required for PI3K pathway signaling and cell proliferation stimulated by EGF and FGF2. Interacts with FAM83B; activates the PI3K/AKT signaling cascade.

It carries out the reaction a 1,2-diacyl-sn-glycero-3-phospho-(1D-myo-inositol-4,5-bisphosphate) + ATP = a 1,2-diacyl-sn-glycero-3-phospho-(1D-myo-inositol-3,4,5-trisphosphate) + ADP + H(+). The catalysed reaction is a 1,2-diacyl-sn-glycero-3-phospho-(1D-myo-inositol) + ATP = a 1,2-diacyl-sn-glycero-3-phospho-(1D-myo-inositol-3-phosphate) + ADP + H(+). It catalyses the reaction L-seryl-[protein] + ATP = O-phospho-L-seryl-[protein] + ADP + H(+). The enzyme catalyses 1,2-dioctanoyl-sn-glycero-3-phospho-(1D-myo-inositol-4,5-bisphosphate) + ATP = 1,2-dioctanoyl-sn-glycero-3-phospho-(1D-myo-inositol-3,4,5-trisphosphate) + ADP + H(+). It carries out the reaction 1-octadecanoyl-2-(5Z,8Z,11Z,14Z)-eicosatetraenoyl-sn-glycero-3-phospho-1D-myo-inositol 4,5-bisphosphate + ATP = 1-octadecanoyl-2-(5Z,8Z,11Z,14Z-eicosatetraenoyl)-sn-glycero-3-phospho-(1D-myo-inositol 3,4,5-triphosphate) + ADP + H(+). The protein operates within phospholipid metabolism; phosphatidylinositol phosphate biosynthesis. Functionally, phosphoinositide-3-kinase (PI3K) phosphorylates phosphatidylinositol (PI) and its phosphorylated derivatives at position 3 of the inositol ring to produce 3-phosphoinositides. Uses ATP and PtdIns(4,5)P2 (phosphatidylinositol 4,5-bisphosphate) to generate phosphatidylinositol 3,4,5-trisphosphate (PIP3). PIP3 plays a key role by recruiting PH domain-containing proteins to the membrane, including AKT1 and PDPK1, activating signaling cascades involved in cell growth, survival, proliferation, motility and morphology. Participates in cellular signaling in response to various growth factors. Involved in the activation of AKT1 upon stimulation by receptor tyrosine kinases ligands such as EGF, insulin, IGF1, VEGFA and PDGF. Involved in signaling via insulin-receptor substrate (IRS) proteins. Essential in endothelial cell migration during vascular development through VEGFA signaling, possibly by regulating RhoA activity. Required for lymphatic vasculature development, possibly by binding to RAS and by activation by EGF and FGF2, but not by PDGF. Regulates invadopodia formation through the PDPK1-AKT1 pathway. Participates in cardiomyogenesis in embryonic stem cells through a AKT1 pathway. Participates in vasculogenesis in embryonic stem cells through PDK1 and protein kinase C pathway. Also has serine-protein kinase activity: phosphorylates PIK3R1 (p85alpha regulatory subunit), EIF4EBP1 and HRAS. Plays a role in the positive regulation of phagocytosis and pinocytosis. The protein is Phosphatidylinositol 4,5-bisphosphate 3-kinase catalytic subunit alpha isoform (Pik3ca) of Mus musculus (Mouse).